The chain runs to 103 residues: Small ribosomal subunit protein uS10 (103 aa).

Belongs to the universal ribosomal protein uS10 family. As to quaternary structure, part of the 30S ribosomal subunit.

Its function is as follows. Involved in the binding of tRNA to the ribosomes. This Psychrobacter sp. (strain PRwf-1) protein is Small ribosomal subunit protein uS10.